The sequence spans 145 residues: Ribosomal RNA large subunit methyltransferase H (145 aa).

S-adenosyl-L-methionine-binding positions include L68, G95, and 113-118; that span reads FSKMTF.

This sequence belongs to the RNA methyltransferase RlmH family. In terms of assembly, homodimer.

It is found in the cytoplasm. The catalysed reaction is pseudouridine(1915) in 23S rRNA + S-adenosyl-L-methionine = N(3)-methylpseudouridine(1915) in 23S rRNA + S-adenosyl-L-homocysteine + H(+). Specifically methylates the pseudouridine at position 1915 (m3Psi1915) in 23S rRNA. This is Ribosomal RNA large subunit methyltransferase H from Mycoplasmopsis pulmonis (strain UAB CTIP) (Mycoplasma pulmonis).